The following is a 124-amino-acid chain: Small ribosomal subunit protein uS12 (124 aa).

Positions 1–28 are disordered; that stretch reads MPTINQLVRKGRTPKVSKTKAPALKGSP. The segment covering 9–18 has biased composition (basic residues); the sequence is RKGRTPKVSK. A 3-methylthioaspartic acid modification is found at aspartate 89.

The protein belongs to the universal ribosomal protein uS12 family. As to quaternary structure, part of the 30S ribosomal subunit. Contacts proteins S8 and S17. May interact with IF1 in the 30S initiation complex.

Functionally, with S4 and S5 plays an important role in translational accuracy. Its function is as follows. Interacts with and stabilizes bases of the 16S rRNA that are involved in tRNA selection in the A site and with the mRNA backbone. Located at the interface of the 30S and 50S subunits, it traverses the body of the 30S subunit contacting proteins on the other side and probably holding the rRNA structure together. The combined cluster of proteins S8, S12 and S17 appears to hold together the shoulder and platform of the 30S subunit. This chain is Small ribosomal subunit protein uS12, found in Paenarthrobacter aurescens (strain TC1).